A 403-amino-acid chain; its full sequence is Dual-specificity RNA methyltransferase RlmN (403 aa).

Residue Glu121 is the Proton acceptor of the active site. Residues 127–375 (ETDRGTLCVS…VRTPRGRDIL (249 aa)) form the Radical SAM core domain. Cys134 and Cys378 are joined by a disulfide. Residues Cys141, Cys145, and Cys148 each coordinate [4Fe-4S] cluster. S-adenosyl-L-methionine-binding positions include 204–205 (GE), Ser236, 258–260 (SLH), and Asn335. Cys378 acts as the S-methylcysteine intermediate in catalysis.

Belongs to the radical SAM superfamily. RlmN family. [4Fe-4S] cluster is required as a cofactor.

It is found in the cytoplasm. It catalyses the reaction adenosine(2503) in 23S rRNA + 2 reduced [2Fe-2S]-[ferredoxin] + 2 S-adenosyl-L-methionine = 2-methyladenosine(2503) in 23S rRNA + 5'-deoxyadenosine + L-methionine + 2 oxidized [2Fe-2S]-[ferredoxin] + S-adenosyl-L-homocysteine. The enzyme catalyses adenosine(37) in tRNA + 2 reduced [2Fe-2S]-[ferredoxin] + 2 S-adenosyl-L-methionine = 2-methyladenosine(37) in tRNA + 5'-deoxyadenosine + L-methionine + 2 oxidized [2Fe-2S]-[ferredoxin] + S-adenosyl-L-homocysteine. Functionally, specifically methylates position 2 of adenine 2503 in 23S rRNA and position 2 of adenine 37 in tRNAs. m2A2503 modification seems to play a crucial role in the proofreading step occurring at the peptidyl transferase center and thus would serve to optimize ribosomal fidelity. The chain is Dual-specificity RNA methyltransferase RlmN from Rhodopseudomonas palustris (strain BisA53).